Consider the following 279-residue polypeptide: Calcium-activated potassium channel subunit beta-3 (279 aa).

Residues 1–60 (MDFSPSSELGFHFVAFILLTRHRTAFPASGKKRETDYSDGDPLDVHKRLPSSAGEDRAVM) lie on the Cytoplasmic side of the membrane. A helical membrane pass occupies residues 61 to 81 (LGFAMMGFSVLMFFLLGTTIL). At 82–207 (KPFMLSIQRE…DVILIKKYDQ (126 aa)) the chain is on the extracellular side. Asn-131 carries N-linked (GlcNAc...) asparagine glycosylation. The helical transmembrane segment at 208–228 (MAIFHCLFWPSLTLLGGALIV) threads the bilayer. The Cytoplasmic segment spans residues 229–279 (GMVRLTQHLSLLCEKYSTVVRDEVGGKVPYIEQHQFKLCIMRRSKGRAEKS).

The protein belongs to the KCNMB (TC 8.A.14.1) family. KCNMB3 subfamily. Interacts with KCNMA1 tetramer. There are probably 4 molecules of KCMNB3 per KCNMA1 tetramer. Post-translationally, N-glycosylated. The extracellular domain contains disulfide bond essential for the gating mechanism. As to expression, isoform 1, isoform 3 and isoform 4 are widely expressed. Isoform 2 is expressed placenta, pancreas, kidney and heart. Isoform 1 and isoform 3 are highly expressed in pancreas and testis.

Its subcellular location is the membrane. Regulatory subunit of the calcium activated potassium KCNMA1 (maxiK) channel. Modulates the calcium sensitivity and gating kinetics of KCNMA1, thereby contributing to KCNMA1 channel diversity. Alters the functional properties of the current expressed by the KCNMA1 channel. Isoform 2, isoform 3 and isoform 4 partially inactivate the current of KCNBMA. Isoform 4 induces a fast and incomplete inactivation of KCNMA1 channel that is detectable only at large depolarizations. In contrast, isoform 1 does not induce detectable inactivation of KCNMA1. Two or more subunits of KCNMB3 are required to block the KCNMA1 tetramer. This is Calcium-activated potassium channel subunit beta-3 (KCNMB3) from Homo sapiens (Human).